Reading from the N-terminus, the 467-residue chain is Ribulose bisphosphate carboxylase large chain (467 aa).

Position 5 is an N6,N6,N6-trimethyllysine (Lys-5). Asn-114 and Thr-164 together coordinate substrate. Catalysis depends on Lys-166, which acts as the Proton acceptor. Lys-168 serves as a coordination point for substrate. Mg(2+) contacts are provided by Lys-192, Asp-194, and Glu-195. At Lys-192 the chain carries N6-carboxylysine. His-285 serves as the catalytic Proton acceptor. Arg-286, His-318, and Ser-370 together coordinate substrate.

Belongs to the RuBisCO large chain family. Type I subfamily. As to quaternary structure, heterohexadecamer of 8 large chains and 8 small chains; disulfide-linked. The disulfide link is formed within the large subunit homodimers. Mg(2+) is required as a cofactor. Post-translationally, the disulfide bond which can form in the large chain dimeric partners within the hexadecamer appears to be associated with oxidative stress and protein turnover.

Its subcellular location is the plastid. The protein localises to the chloroplast. It carries out the reaction 2 (2R)-3-phosphoglycerate + 2 H(+) = D-ribulose 1,5-bisphosphate + CO2 + H2O. It catalyses the reaction D-ribulose 1,5-bisphosphate + O2 = 2-phosphoglycolate + (2R)-3-phosphoglycerate + 2 H(+). In terms of biological role, ruBisCO catalyzes two reactions: the carboxylation of D-ribulose 1,5-bisphosphate, the primary event in carbon dioxide fixation, as well as the oxidative fragmentation of the pentose substrate in the photorespiration process. Both reactions occur simultaneously and in competition at the same active site. The protein is Ribulose bisphosphate carboxylase large chain of Hydrophyllum virginianum (Eastern waterleaf).